A 101-amino-acid chain; its full sequence is Small ribosomal subunit protein uS14 (101 aa).

Residues 1–10 (MAKKSSIEKN) are compositionally biased toward basic and acidic residues. The disordered stretch occupies residues 1-24 (MAKKSSIEKNNRRKRLTKNAAPKR). Positions 11–24 (NRRKRLTKNAAPKR) are enriched in basic residues.

The protein belongs to the universal ribosomal protein uS14 family. In terms of assembly, part of the 30S ribosomal subunit. Contacts proteins S3 and S10.

In terms of biological role, binds 16S rRNA, required for the assembly of 30S particles and may also be responsible for determining the conformation of the 16S rRNA at the A site. The chain is Small ribosomal subunit protein uS14 from Rhodopseudomonas palustris (strain BisB18).